The following is a 445-amino-acid chain: Trigger factor (445 aa).

A PPIase FKBP-type domain is found at 162 to 247 (GDQVTIDAIG…IKAVHTAEPT (86 aa)).

This sequence belongs to the FKBP-type PPIase family. Tig subfamily.

The protein resides in the cytoplasm. The catalysed reaction is [protein]-peptidylproline (omega=180) = [protein]-peptidylproline (omega=0). Its function is as follows. Involved in protein export. Acts as a chaperone by maintaining the newly synthesized protein in an open conformation. Functions as a peptidyl-prolyl cis-trans isomerase. This is Trigger factor from Rickettsia massiliae (strain Mtu5).